Reading from the N-terminus, the 65-residue chain is Large ribosomal subunit protein uL29 (65 aa).

The protein belongs to the universal ribosomal protein uL29 family.

The chain is Large ribosomal subunit protein uL29 from Xylella fastidiosa (strain Temecula1 / ATCC 700964).